An 865-amino-acid polypeptide reads, in one-letter code: Envelope glycoprotein gp160 (865 aa).

The N-terminal stretch at 1–31 is a signal peptide; it reads MRVMEMRKNCQHLWKWGTMLLGMLMICSAAE. At 32 to 693 the chain is on the extracellular side; the sequence is DLWVTVYYGV…ITQWLWYIRI (662 aa). Residues cysteine 53 and cysteine 73 are joined by a disulfide bond. N-linked (GlcNAc...) asparagine; by host glycosylation is found at asparagine 87, asparagine 129, asparagine 136, asparagine 139, asparagine 156, asparagine 193, asparagine 194, asparagine 197, asparagine 198, asparagine 203, asparagine 210, asparagine 247, asparagine 254, asparagine 275, asparagine 289, asparagine 302, asparagine 308, asparagine 314, asparagine 344, asparagine 351, and asparagine 367. 5 disulfides stabilise this stretch: cysteine 118/cysteine 218, cysteine 125/cysteine 209, cysteine 130/cysteine 157, cysteine 231/cysteine 260, and cysteine 241/cysteine 252. Positions 130 to 156 are V1; that stretch reads CTDANLNGTNVTSSSGGTMMENGEIKN. Positions 157–209 are V2; sequence CSFQVTTSRRDKTQKKYALFYKLDVVPIEKGNISPKNNTSNNTSYGNYTLIHC. A V3 region spans residues 309–342; it reads CTRPNNNTRKSITKGPGRVIYATGQIIGDIRKAH. A disulfide bond links cysteine 309 and cysteine 343. The segment at 375 to 385 is CD4-binding loop; the sequence is SSGGDPEIVLH. 2 disulfides stabilise this stretch: cysteine 389–cysteine 452 and cysteine 396–cysteine 425. Positions 396–425 are V4; that stretch reads CNTTQLFNSTWNSTEGSNNTGGNDTITLPC. Residues asparagine 397, asparagine 403, asparagine 407, asparagine 413, asparagine 418, asparagine 455, and asparagine 471 are each glycosylated (N-linked (GlcNAc...) asparagine; by host). V5 stretches follow at residues 468-479 and 470-479; these read DTTNTTEIFRLG and TNTTEIFRLG. The segment at 520-541 is fusion peptide; sequence AVGTIGAMFLGFLGAAGSTMGA. Residues 583–601 form an immunosuppression region; it reads KQLQARVLAVERYLRDQQL. Cysteine 607 and cysteine 613 are oxidised to a cystine. Asparagine 620, asparagine 625, asparagine 634, and asparagine 646 each carry an N-linked (GlcNAc...) asparagine; by host glycan. Positions 642-676 form a coiled coil; sequence REIDNYTGIIYNLLEESQNQQEKNEQELLELDKWA. The interval 671–692 is MPER; binding to GalCer; that stretch reads ELDKWANLWNWFDITQWLWYIR. A helical membrane pass occupies residues 694 to 714; sequence FIMIVGGLVGLKIVFAVLSIV. The Cytoplasmic segment spans residues 715-865; that stretch reads NRVRQGYSPL…IRQGLERALL (151 aa). Residues 721–724 carry the YXXL motif; contains endocytosis signal motif; the sequence is YSPL. The interval 728-754 is disordered; sequence THLPAPRGPDRPEGIEGEGGERDRDRS. Over residues 735-754 the composition is skewed to basic and acidic residues; that stretch reads GPDRPEGIEGEGGERDRDRS. Cysteine 773 carries S-palmitoyl cysteine; by host lipidation. The short motif at 864–865 is the Di-leucine internalization motif element; that stretch reads LL.

Belongs to the HIV-1 env protein family. As to quaternary structure, the mature envelope protein (Env) consists of a homotrimer of non-covalently associated gp120-gp41 heterodimers. The resulting complex protrudes from the virus surface as a spike. There seems to be as few as 10 spikes on the average virion. Interacts with host CD4, CCR5 and CXCR4. Gp120 also interacts with the C-type lectins CD209/DC-SIGN and CLEC4M/DC-SIGNR (collectively referred to as DC-SIGN(R)). Gp120 and gp41 interact with GalCer. Gp120 interacts with host ITGA4/ITGB7 complex; on CD4+ T-cells, this interaction results in rapid activation of integrin ITGAL/LFA-1, which facilitates efficient cell-to-cell spreading of HIV-1. Gp120 interacts with cell-associated heparan sulfate; this interaction increases virus infectivity on permissive cells and may be involved in infection of CD4- cells. In terms of assembly, the mature envelope protein (Env) consists of a homotrimer of non-covalently associated gp120-gp41 heterodimers. The resulting complex protrudes from the virus surface as a spike. There seems to be as few as 10 spikes on the average virion. Post-translationally, highly glycosylated by host. The high number of glycan on the protein is reffered to as 'glycan shield' because it contributes to hide protein sequence from adaptive immune system. Palmitoylation of the transmembrane protein and of Env polyprotein (prior to its proteolytic cleavage) is essential for their association with host cell membrane lipid rafts. Palmitoylation is therefore required for envelope trafficking to classical lipid rafts, but not for viral replication. In terms of processing, specific enzymatic cleavages in vivo yield mature proteins. Envelope glycoproteins are synthesized as an inactive precursor that is heavily N-glycosylated and processed likely by host cell furin in the Golgi to yield the mature SU and TM proteins. The cleavage site between SU and TM requires the minimal sequence [KR]-X-[KR]-R. About 2 of the 9 disulfide bonds of gp41 are reduced by P4HB/PDI, following binding to CD4 receptor.

The protein localises to the virion membrane. The protein resides in the host cell membrane. Its subcellular location is the host endosome membrane. Functionally, oligomerizes in the host endoplasmic reticulum into predominantly trimers. In a second time, gp160 transits in the host Golgi, where glycosylation is completed. The precursor is then proteolytically cleaved in the trans-Golgi and thereby activated by cellular furin or furin-like proteases to produce gp120 and gp41. Its function is as follows. Attaches the virus to the host lymphoid cell by binding to the primary receptor CD4. This interaction induces a structural rearrangement creating a high affinity binding site for a chemokine coreceptor like CXCR4 and/or CCR5. Acts as a ligand for CD209/DC-SIGN and CLEC4M/DC-SIGNR, which are respectively found on dendritic cells (DCs), and on endothelial cells of liver sinusoids and lymph node sinuses. These interactions allow capture of viral particles at mucosal surfaces by these cells and subsequent transmission to permissive cells. HIV subverts the migration properties of dendritic cells to gain access to CD4+ T-cells in lymph nodes. Virus transmission to permissive T-cells occurs either in trans (without DCs infection, through viral capture and transmission), or in cis (following DCs productive infection, through the usual CD4-gp120 interaction), thereby inducing a robust infection. In trans infection, bound virions remain infectious over days and it is proposed that they are not degraded, but protected in non-lysosomal acidic organelles within the DCs close to the cell membrane thus contributing to the viral infectious potential during DCs' migration from the periphery to the lymphoid tissues. On arrival at lymphoid tissues, intact virions recycle back to DCs' cell surface allowing virus transmission to CD4+ T-cells. Acts as a class I viral fusion protein. Under the current model, the protein has at least 3 conformational states: pre-fusion native state, pre-hairpin intermediate state, and post-fusion hairpin state. During fusion of viral and target intracellular membranes, the coiled coil regions (heptad repeats) assume a trimer-of-hairpins structure, positioning the fusion peptide in close proximity to the C-terminal region of the ectodomain. The formation of this structure appears to drive apposition and subsequent fusion of viral and target cell membranes. Complete fusion occurs in host cell endosomes and is dynamin-dependent, however some lipid transfer might occur at the plasma membrane. The virus undergoes clathrin-dependent internalization long before endosomal fusion, thus minimizing the surface exposure of conserved viral epitopes during fusion and reducing the efficacy of inhibitors targeting these epitopes. Membranes fusion leads to delivery of the nucleocapsid into the cytoplasm. This is Envelope glycoprotein gp160 from Homo sapiens (Human).